We begin with the raw amino-acid sequence, 868 residues long: Hopanoid transporter HpnN (868 aa).

12 helical membrane passes run 16–36 (FAAF…FYTY), 273–293 (GAVV…WMAL), 298–318 (IIFA…AVGL), 326–346 (LLSI…GIQF), 370–390 (YSAV…LSFL), 403–423 (IAGA…PALL), 452–472 (IAII…LYFM), 710–730 (IVAS…ILLW), 740–760 (ALTL…CVLI), 762–782 (LPLN…GVAF), 805–825 (AIFF…LSSH), and 834–854 (LLAL…PALM). One can recognise an SSD domain in the interval 299 to 425 (IFAVAANLVI…ITVLPALLKL (127 aa)).

This sequence belongs to the resistance-nodulation-cell division (RND) (TC 2.A.6) family. MmpL subfamily.

It is found in the cell inner membrane. Functionally, essential for hopanoid transport from the cytoplasmic to the outer membrane. Required for the C(35) hopanoid, bacteriohopanetetrol, to remain localized to the mother cell type. The chain is Hopanoid transporter HpnN from Rhodopseudomonas palustris (strain TIE-1).